Here is a 261-residue protein sequence, read N- to C-terminus: Adenosylcobinamide-GDP ribazoletransferase (261 aa).

The next 5 membrane-spanning stretches (helical) occupy residues Tyr-31–Phe-51, Leu-59–Ile-79, Phe-125–Val-145, Val-183–Val-203, and Leu-240–Trp-260.

The protein belongs to the CobS family. Mg(2+) is required as a cofactor.

Its subcellular location is the cell membrane. The enzyme catalyses alpha-ribazole + adenosylcob(III)inamide-GDP = adenosylcob(III)alamin + GMP + H(+). The catalysed reaction is alpha-ribazole 5'-phosphate + adenosylcob(III)inamide-GDP = adenosylcob(III)alamin 5'-phosphate + GMP + H(+). It functions in the pathway cofactor biosynthesis; adenosylcobalamin biosynthesis; adenosylcobalamin from cob(II)yrinate a,c-diamide: step 7/7. Functionally, joins adenosylcobinamide-GDP and alpha-ribazole to generate adenosylcobalamin (Ado-cobalamin). Also synthesizes adenosylcobalamin 5'-phosphate from adenosylcobinamide-GDP and alpha-ribazole 5'-phosphate. The protein is Adenosylcobinamide-GDP ribazoletransferase of Lachnoclostridium phytofermentans (strain ATCC 700394 / DSM 18823 / ISDg) (Clostridium phytofermentans).